The primary structure comprises 520 residues: Ribonuclease Y (520 aa).

Residues 4–24 (TVWILISILLATVGAVVGFFV) traverse the membrane as a helical segment. Residues 210–273 (TVSVVNLPND…ETARIALDKL (64 aa)) form the KH domain. The region spanning 336 to 429 (VLKHSMEVAY…VAAADALSAA (94 aa)) is the HD domain.

Belongs to the RNase Y family.

It is found in the cell membrane. Endoribonuclease that initiates mRNA decay. This chain is Ribonuclease Y, found in Bacillus cereus (strain ZK / E33L).